The sequence spans 467 residues: Transcriptional modulator WTM2 (467 aa).

Over residues 1–12 the composition is skewed to low complexity; that stretch reads MAKSKSSQGASG. 2 disordered regions span residues 1 to 22 and 84 to 121; these read MAKS…PSLY and TFYD…AFQD. Positions 87-100 are enriched in acidic residues; that stretch reads DDDDDDDNDDDDEE. 3 WD repeats span residues 244–282, 287–327, and 349–389; these read PGTN…KPLW, PKNG…LATT, and SGGD…SRND.

Functionally, transcriptional modulator with roles in meiotic regulation and silencing. This Saccharomyces cerevisiae (strain ATCC 204508 / S288c) (Baker's yeast) protein is Transcriptional modulator WTM2 (WTM2).